A 214-amino-acid chain; its full sequence is Outer-membrane lipoprotein LolB (214 aa).

An N-terminal signal peptide occupies residues M1 to G25. C26 is lipidated: N-palmitoyl cysteine. A lipid anchor (S-diacylglycerol cysteine) is attached at C26.

Belongs to the LolB family. As to quaternary structure, monomer.

It localises to the cell outer membrane. Functionally, plays a critical role in the incorporation of lipoproteins in the outer membrane after they are released by the LolA protein. The chain is Outer-membrane lipoprotein LolB from Shewanella putrefaciens (strain CN-32 / ATCC BAA-453).